A 419-amino-acid polypeptide reads, in one-letter code: DNA primase DnaG (419 aa).

The region spanning 168 to 244 is the Toprim domain; it reads DTIIVVEGRS…KVDYVARAPE (77 aa). Positions 174, 218, and 220 each coordinate Mg(2+). Basic and acidic residues-rich tracts occupy residues 280–291 and 306–316; these read KPAEEAVKREEE and KAAKPPEEKPP. The interval 280–317 is disordered; the sequence is KPAEEAVKREEEAAAEAKPPAPAVQEKAAKPPEEKPPT.

This sequence belongs to the archaeal DnaG primase family. As to quaternary structure, forms a ternary complex with MCM helicase and DNA. Component of the archaeal exosome complex. Mg(2+) is required as a cofactor.

It catalyses the reaction ssDNA + n NTP = ssDNA/pppN(pN)n-1 hybrid + (n-1) diphosphate.. Functionally, RNA polymerase that catalyzes the synthesis of short RNA molecules used as primers for DNA polymerase during DNA replication. Also part of the exosome, which is a complex involved in RNA degradation. Acts as a poly(A)-binding protein that enhances the interaction between heteromeric, adenine-rich transcripts and the exosome. The polypeptide is DNA primase DnaG (Aeropyrum pernix (strain ATCC 700893 / DSM 11879 / JCM 9820 / NBRC 100138 / K1)).